The chain runs to 376 residues: Erythronate-4-phosphate dehydrogenase (376 aa).

Substrate contacts are provided by Ser45 and Thr67. Asp147 contributes to the NAD(+) binding site. Arg209 is an active-site residue. Asp233 contacts NAD(+). Residue Glu238 is part of the active site. Residue His255 is the Proton donor of the active site. Residue Gly258 coordinates NAD(+). Substrate is bound at residue Tyr259.

The protein belongs to the D-isomer specific 2-hydroxyacid dehydrogenase family. PdxB subfamily. Homodimer.

It is found in the cytoplasm. The enzyme catalyses 4-phospho-D-erythronate + NAD(+) = (R)-3-hydroxy-2-oxo-4-phosphooxybutanoate + NADH + H(+). It functions in the pathway cofactor biosynthesis; pyridoxine 5'-phosphate biosynthesis; pyridoxine 5'-phosphate from D-erythrose 4-phosphate: step 2/5. Catalyzes the oxidation of erythronate-4-phosphate to 3-hydroxy-2-oxo-4-phosphonooxybutanoate. This is Erythronate-4-phosphate dehydrogenase from Shewanella sp. (strain ANA-3).